We begin with the raw amino-acid sequence, 484 residues long: ATP synthase subunit beta (484 aa).

ATP is bound at residue 162 to 169 (GGAGVGKT).

This sequence belongs to the ATPase alpha/beta chains family. F-type ATPases have 2 components, CF(1) - the catalytic core - and CF(0) - the membrane proton channel. CF(1) has five subunits: alpha(3), beta(3), gamma(1), delta(1), epsilon(1). CF(0) has four main subunits: a(1), b(1), b'(1) and c(9-12).

Its subcellular location is the cellular thylakoid membrane. The enzyme catalyses ATP + H2O + 4 H(+)(in) = ADP + phosphate + 5 H(+)(out). In terms of biological role, produces ATP from ADP in the presence of a proton gradient across the membrane. The catalytic sites are hosted primarily by the beta subunits. The protein is ATP synthase subunit beta of Trichodesmium erythraeum (strain IMS101).